A 267-amino-acid chain; its full sequence is Hydroxynaphthalene reductase-like protein Arp2 (267 aa).

The NADP(+) site is built by Ile25, Asn45, Asp71, and Asn98. Catalysis depends on proton donor residues Ser147 and Ser148. Residues Tyr162, Lys166, Val195, and Thr197 each coordinate NADP(+). The active-site Proton acceptor is Tyr162. Lys166 acts as the Lowers pKa of active site Tyr in catalysis.

This sequence belongs to the short-chain dehydrogenases/reductases (SDR) family.

Its function is as follows. Hydroxynaphthalene reductase-like protein; part of the Pks2 gene cluster that mediates the formation of infectious structures (appressoria), enabling these fungi to kill insects faster. The product of the Pks2 gene cluster is different from the one of Pks1 and has still not been identified. This Metarhizium anisopliae (strain ARSEF 549) protein is Hydroxynaphthalene reductase-like protein Arp2.